A 290-amino-acid polypeptide reads, in one-letter code: 6-phospho-5-dehydro-2-deoxy-D-gluconate aldolase (290 aa).

Asp-85 serves as the catalytic Proton donor. Positions 86 and 180 each coordinate Zn(2+). Gly-181 provides a ligand contact to dihydroxyacetone phosphate. Residue His-208 coordinates Zn(2+). Residues 209–211 and 230–233 each bind dihydroxyacetone phosphate; these read GAS and NINT. Thr-233 is modified (phosphothreonine).

The protein belongs to the class II fructose-bisphosphate aldolase family. IolJ subfamily. Zn(2+) is required as a cofactor.

It catalyses the reaction 6-phospho-5-dehydro-2-deoxy-D-gluconate = 3-oxopropanoate + dihydroxyacetone phosphate. It functions in the pathway polyol metabolism; myo-inositol degradation into acetyl-CoA; acetyl-CoA from myo-inositol: step 6/7. In terms of biological role, produces dihydroxyacetone phosphate (DHAP or glycerone phosphate) and malonic semialdehyde (MSA or 3-oxopropanoate) from 6-phospho-5-dehydro-2-deoxy-D-gluconate (DKGP). The protein is 6-phospho-5-dehydro-2-deoxy-D-gluconate aldolase (iolJ) of Bacillus subtilis (strain 168).